The following is a 284-amino-acid chain: Bifunctional protein FolD (284 aa).

Residues 166-168 and Ile-232 contribute to the NADP(+) site; that span reads GAS.

Belongs to the tetrahydrofolate dehydrogenase/cyclohydrolase family. Homodimer.

The catalysed reaction is (6R)-5,10-methylene-5,6,7,8-tetrahydrofolate + NADP(+) = (6R)-5,10-methenyltetrahydrofolate + NADPH. It catalyses the reaction (6R)-5,10-methenyltetrahydrofolate + H2O = (6R)-10-formyltetrahydrofolate + H(+). The protein operates within one-carbon metabolism; tetrahydrofolate interconversion. Its function is as follows. Catalyzes the oxidation of 5,10-methylenetetrahydrofolate to 5,10-methenyltetrahydrofolate and then the hydrolysis of 5,10-methenyltetrahydrofolate to 10-formyltetrahydrofolate. The protein is Bifunctional protein FolD of Azotobacter vinelandii (strain DJ / ATCC BAA-1303).